Consider the following 303-residue polypeptide: MISIFSKLKQSLSKTSNKISEGIDKIFYKKKLDAGTLEELEELLISSDMSVLVVTNIIEEFKKVKFDKEIDSDTVKEALAKLIEQQLSKSAIPFTLSENKLNVILVCGVNGAGKTTTIGKLASMYSAQGKKVAVAACDTFRAAAVNQLSTWADRANALLITGEESADPASVAYRGMEESIKQNIDILFIDTAGRLHNKKNLMDELSKIVKVIKKLDENAPTHSVLVIDAITGQNTYNQVEHFNDATNLTGLIVTKLDGSAKAGVIVGVVQKFNLPLYFIGIGEKIEDLKIFNQHDFARNLVGL.

GTP is bound by residues 108 to 115, 190 to 194, and 254 to 257; these read GVNGAGKT, DTAGR, and TKLD.

It belongs to the GTP-binding SRP family. FtsY subfamily. In terms of assembly, part of the signal recognition particle protein translocation system, which is composed of SRP and FtsY. SRP is a ribonucleoprotein composed of Ffh and a 4.5S RNA molecule.

It localises to the cell inner membrane. It is found in the cytoplasm. The enzyme catalyses GTP + H2O = GDP + phosphate + H(+). Its function is as follows. Involved in targeting and insertion of nascent membrane proteins into the cytoplasmic membrane. Acts as a receptor for the complex formed by the signal recognition particle (SRP) and the ribosome-nascent chain (RNC). Interaction with SRP-RNC leads to the transfer of the RNC complex to the Sec translocase for insertion into the membrane, the hydrolysis of GTP by both Ffh and FtsY, and the dissociation of the SRP-FtsY complex into the individual components. This is Signal recognition particle receptor FtsY from Rickettsia conorii (strain ATCC VR-613 / Malish 7).